The chain runs to 214 residues: Large ribosomal subunit protein bL25 (214 aa).

A disordered region spans residues 189–214 (IHASRKAKADEDEAAEGEEGEEGAED). Residues 198-214 (DEDEAAEGEEGEEGAED) show a composition bias toward acidic residues.

Belongs to the bacterial ribosomal protein bL25 family. CTC subfamily. As to quaternary structure, part of the 50S ribosomal subunit; part of the 5S rRNA/L5/L18/L25 subcomplex. Contacts the 5S rRNA. Binds to the 5S rRNA independently of L5 and L18.

This is one of the proteins that binds to the 5S RNA in the ribosome where it forms part of the central protuberance. The polypeptide is Large ribosomal subunit protein bL25 (Alkalilimnicola ehrlichii (strain ATCC BAA-1101 / DSM 17681 / MLHE-1)).